Here is a 154-residue protein sequence, read N- to C-terminus: Catabolic 3-dehydroquinase (154 aa).

The active-site Proton acceptor is Y25. Substrate contacts are provided by N79, H85, and D92. The active-site Proton donor is H105. Residues 106-107 (IS) and R116 contribute to the substrate site.

The protein belongs to the type-II 3-dehydroquinase family. As to quaternary structure, homododecamer. Adopts a ring-like structure, composed of an arrangement of two hexameric rings stacked on top of one another.

It catalyses the reaction 3-dehydroquinate = 3-dehydroshikimate + H2O. It participates in aromatic compound metabolism; 3,4-dihydroxybenzoate biosynthesis; 3,4-dihydroxybenzoate from 3-dehydroquinate: step 1/2. Functionally, is involved in the catabolism of quinate. Allows the utilization of quinate as carbon source via the beta-ketoadipate pathway. This chain is Catabolic 3-dehydroquinase, found in Botryotinia fuckeliana (strain B05.10) (Noble rot fungus).